Here is a 239-residue protein sequence, read N- to C-terminus: 1-(5-phosphoribosyl)-5-[(5-phosphoribosylamino)methylideneamino] imidazole-4-carboxamide isomerase (239 aa).

The active-site Proton acceptor is D8. The Proton donor role is filled by D130.

Belongs to the HisA/HisF family.

Its subcellular location is the cytoplasm. The enzyme catalyses 1-(5-phospho-beta-D-ribosyl)-5-[(5-phospho-beta-D-ribosylamino)methylideneamino]imidazole-4-carboxamide = 5-[(5-phospho-1-deoxy-D-ribulos-1-ylimino)methylamino]-1-(5-phospho-beta-D-ribosyl)imidazole-4-carboxamide. The protein operates within amino-acid biosynthesis; L-histidine biosynthesis; L-histidine from 5-phospho-alpha-D-ribose 1-diphosphate: step 4/9. This chain is 1-(5-phosphoribosyl)-5-[(5-phosphoribosylamino)methylideneamino] imidazole-4-carboxamide isomerase, found in Lachnoclostridium phytofermentans (strain ATCC 700394 / DSM 18823 / ISDg) (Clostridium phytofermentans).